Here is a 401-residue protein sequence, read N- to C-terminus: MFANINIRKSVWLFLLAAVSCTLFIYGVTRTDLQTLKNPSSLTSPSSSTSVDKKKPLFTKSPRNSASCESTITLQSNLLFTYYKHYFAGIKKVALIGFPDHPNKGDSAIYVAEKKLLDALNIEVVYITAQEADYSASELKSIISDIPRDEFALAFHGGGNFGDLYPDHQHLRELVVRDFPSFTTISFPQSVWYNEQQLLEQASILYAENPNITLVTRDRQSYGFAVDAFGKHNEVLLTPDIVFFMGPIPEIREATPITHDVLILARLDHEGGQQHGAEDYYRDTLNAANLTYSVEDWLLWDPPVAQNPDSSFDDRGQARYEAGAEFLASARVVITDRLHAHILSTLMGIPHIVVENSQMGKITNYHNTWLHGCTLDGVSVVVDSVDKALSLLLEWNEAGYF.

A signal peptide spans 1–30; sequence MFANINIRKSVWLFLLAAVSCTLFIYGVTR. The disordered stretch occupies residues 38–64; the sequence is NPSSLTSPSSSTSVDKKKPLFTKSPRN. The span at 39 to 50 shows a compositional bias: low complexity; that stretch reads PSSLTSPSSSTS.

Belongs to the polysaccharide pyruvyl transferase family.

In terms of biological role, involved in cell wall biogenesis. Has a role in the addition of Gal-beta1,3 moieties to galactomannans and their subsequent pyruvylation. This Schizosaccharomyces pombe (strain 972 / ATCC 24843) (Fission yeast) protein is Pyruvyl transferase 1 (pvg1).